Reading from the N-terminus, the 211-residue chain is SOSS complex subunit B2 (211 aa).

The OB DNA-binding region spans 27–97 (IVLEIGRVTK…TLYTGRGGDL (71 aa)). Positions 125 to 211 (NQQNKTSKEQ…GRDPRRASKR (87 aa)) are disordered. Residues 136 to 157 (GNSPPNQNAGNGTVPVFSNNNA) are compositionally biased toward polar residues. The segment covering 179-195 (NGPPPVTAGGTPAPPKP) has biased composition (pro residues).

The protein belongs to the SOSS-B family. SOSS-B2 subfamily. Component of the SOSS complex, composed of soss-b (soss-b1/nabp2 or soss-b2/nabp1), soss-a/ints3 and soss-c/inip. SOSS complexes containing soss-b1/nabp2 are more abundant than complexes containing soss-b2/nabp1.

Its subcellular location is the nucleus. In terms of biological role, component of the SOSS complex, a multiprotein complex that functions downstream of the MRN complex to promote DNA repair and G2/M checkpoint. In the SOSS complex, acts as a sensor of single-stranded DNA that binds to single-stranded DNA. The SOSS complex associates with DNA lesions and influences diverse endpoints in the cellular DNA damage response including cell-cycle checkpoint activation, recombinational repair and maintenance of genomic stability. Required for efficient homologous recombination-dependent repair of double-strand breaks (DSBs). This is SOSS complex subunit B2 (nabp1) from Danio rerio (Zebrafish).